We begin with the raw amino-acid sequence, 293 residues long: Protease HtpX homolog (293 aa).

Transmembrane regions (helical) follow at residues 5–25 (IFLF…TLRL) and 43–63 (ALLV…LAMS). Residue His148 coordinates Zn(2+). Glu149 is an active-site residue. Position 152 (His152) interacts with Zn(2+). A run of 2 helical transmembrane segments spans residues 159-179 (VTLA…SRII) and 199-219 (FVTS…IVMW). Glu225 is a binding site for Zn(2+).

The protein belongs to the peptidase M48B family. The cofactor is Zn(2+).

It is found in the cell inner membrane. In Nitrosomonas europaea (strain ATCC 19718 / CIP 103999 / KCTC 2705 / NBRC 14298), this protein is Protease HtpX homolog.